The following is a 328-amino-acid chain: Probable E3 ubiquitin-protein ligase RHC1A (328 aa).

Serine 2 bears the N-acetylserine mark. An RING-type; atypical zinc finger spans residues 190–231; the sequence is CPVCKDEFELGSEAKQMPCNHIYHSDCIVPWLVQHNSCPVCR. Residues 233-324 form a disordered region; the sequence is ELPSASGPSS…QQSYMGYSGW (92 aa). Positions 238–250 are enriched in polar residues; the sequence is SGPSSSQNRTTPT. 2 stretches are compositionally biased toward low complexity: residues 251–266 and 275–290; these read RNYRSSSSSSSSNSRE and FSSFWPFRSSGSSSSS. Polar residues predominate over residues 291–300; that stretch reads TQNRGGTRNS.

The enzyme catalyses S-ubiquitinyl-[E2 ubiquitin-conjugating enzyme]-L-cysteine + [acceptor protein]-L-lysine = [E2 ubiquitin-conjugating enzyme]-L-cysteine + N(6)-ubiquitinyl-[acceptor protein]-L-lysine.. The protein operates within protein modification; protein ubiquitination. Probable E3 ubiquitin-protein ligase that may possess E3 ubiquitin ligase activity in vitro. This chain is Probable E3 ubiquitin-protein ligase RHC1A, found in Arabidopsis thaliana (Mouse-ear cress).